A 338-amino-acid chain; its full sequence is Ferrochelatase (338 aa).

Fe cation contacts are provided by His-210 and Glu-291.

This sequence belongs to the ferrochelatase family.

The protein resides in the cytoplasm. It carries out the reaction heme b + 2 H(+) = protoporphyrin IX + Fe(2+). The protein operates within porphyrin-containing compound metabolism; protoheme biosynthesis; protoheme from protoporphyrin-IX: step 1/1. Its function is as follows. Catalyzes the ferrous insertion into protoporphyrin IX. The polypeptide is Ferrochelatase (Helicobacter acinonychis (strain Sheeba)).